A 268-amino-acid polypeptide reads, in one-letter code: tRNA pseudouridine synthase A (268 aa).

The Nucleophile role is filled by Asp-52. Tyr-110 lines the substrate pocket.

This sequence belongs to the tRNA pseudouridine synthase TruA family. Homodimer.

It carries out the reaction uridine(38/39/40) in tRNA = pseudouridine(38/39/40) in tRNA. Formation of pseudouridine at positions 38, 39 and 40 in the anticodon stem and loop of transfer RNAs. The chain is tRNA pseudouridine synthase A from Prochlorococcus marinus (strain AS9601).